The primary structure comprises 199 residues: Imidazoleglycerol-phosphate dehydratase (199 aa).

This sequence belongs to the imidazoleglycerol-phosphate dehydratase family.

It is found in the cytoplasm. It carries out the reaction D-erythro-1-(imidazol-4-yl)glycerol 3-phosphate = 3-(imidazol-4-yl)-2-oxopropyl phosphate + H2O. It participates in amino-acid biosynthesis; L-histidine biosynthesis; L-histidine from 5-phospho-alpha-D-ribose 1-diphosphate: step 6/9. This is Imidazoleglycerol-phosphate dehydratase from Lactococcus lactis subsp. cremoris (strain MG1363).